The primary structure comprises 212 residues: MNSQQCVIIGIAGASASGKSLIAKTIFDELRRDLGTDQIGVINEDAYYKDQSHMSMEERVQTNYDHPKALDHQLLCSHLKQLKAGQAADIPCYSYTEHTRISETIHMTPKKVIILEGILLLTDPKLRDLMDASVFMDTPLDICFLRRLTRDVAERDRTMESVISQYKKTVRPMFLQFIEPSKQYADIIVPRGGKNRIATDILKTRIQHLLAK.

Residue 13-20 (GASASGKS) coordinates ATP.

The protein belongs to the uridine kinase family.

It localises to the cytoplasm. It catalyses the reaction uridine + ATP = UMP + ADP + H(+). It carries out the reaction cytidine + ATP = CMP + ADP + H(+). The protein operates within pyrimidine metabolism; CTP biosynthesis via salvage pathway; CTP from cytidine: step 1/3. Its pathway is pyrimidine metabolism; UMP biosynthesis via salvage pathway; UMP from uridine: step 1/1. In Shewanella denitrificans (strain OS217 / ATCC BAA-1090 / DSM 15013), this protein is Uridine kinase.